The chain runs to 1399 residues: Meiosis-specific protein ASY2 (1399 aa).

Residues 10-248 form the HORMA domain; that stretch reads QQSLILTTEL…SQHHVLTVKV (239 aa). Positions 257-266 are enriched in acidic residues; the sequence is PCEDENDNMQ. Disordered regions lie at residues 257-281, 487-525, 617-656, 940-974, and 1045-1090; these read PCEDENDNMQDDERSKGPDSLHDDQ, SKPKVTMEELEEKLTPPSSEPKSAPPSSEPKSAPPSSEP, RLTGNPSNEAQSSRSNRIEIPTLLDEPDREGSGGHLAAPE, PPPPAPIEEERQPLDGEAAASNPPVSAGPSGVDQV, and DQDK…AAPK. The span at 267-281 shows a compositional bias: basic and acidic residues; the sequence is DDERSKGPDSLHDDQ. Residues 509-523 show a composition bias toward pro residues; the sequence is SAPPSSEPKSAPPSS. The span at 617–631 shows a compositional bias: polar residues; the sequence is RLTGNPSNEAQSSRS. Residues 1205–1246 are a coiled coil; sequence MASLRDAAEIHKAEMSSLNDEVKRLNSREADLQKEFSDLQVA.

The protein resides in the chromosome. The protein localises to the nucleus. In terms of biological role, required for normal meiosis. The polypeptide is Meiosis-specific protein ASY2 (Arabidopsis thaliana (Mouse-ear cress)).